The following is a 283-amino-acid chain: Nucleoid occlusion protein (283 aa).

The H-T-H motif DNA-binding region spans 148-167; that stretch reads EALAQRLGKGQSTIANKLRL.

This sequence belongs to the ParB family.

The protein localises to the cytoplasm. Its subcellular location is the nucleoid. Functionally, effects nucleoid occlusion by binding relatively nonspecifically to DNA and preventing the assembly of the division machinery in the vicinity of the nucleoid, especially under conditions that disturb the cell cycle. It helps to coordinate cell division and chromosome segregation by preventing the formation of the Z ring through the nucleoid, which would cause chromosome breakage. In Bacillus licheniformis (strain ATCC 14580 / DSM 13 / JCM 2505 / CCUG 7422 / NBRC 12200 / NCIMB 9375 / NCTC 10341 / NRRL NRS-1264 / Gibson 46), this protein is Nucleoid occlusion protein.